A 142-amino-acid chain; its full sequence is MISTARVPADKPVRIAFSLNDAPDDTPSEDAIPLVFPELEQQLQPLPPCHDSVESMQVFKQHCQIAEEYHEVKKEIALLEERKKELIAKLDQAEKEKLDAAQLVQEFEALTEENRTLKMAQSQCVEQLENLRIQYQKRQGSS.

As to expression, ubiquitous.

In Mus musculus (Mouse), this protein is MAP3K7 C-terminal-like protein (Map3k7cl).